Here is a 329-residue protein sequence, read N- to C-terminus: MAP kinase-activated protein kinase 2 (329 aa).

ATP-binding positions include 1-7 and Lys22; that span reads LGINGKV. The Protein kinase domain maps to 1–254; that stretch reads LGINGKVLRI…ITEFMNHPWI (254 aa). 68-70 contacts staurosporine; it reads ECL. Asp115 (proton acceptor) is an active-site residue. Thr151 bears the Phosphothreonine; by MAPK14 mark. Position 201 is a phosphoserine; by MAPK14 (Ser201). Phosphoserine; by autocatalysis is present on Ser257. The interval 257 to 293 is autoinhibitory helix; the sequence is STKVPQTPLHTSRVLKEDKERWEDVKEEMTSALATMR. Thr263 carries the phosphothreonine; by MAPK14 modification. Lys282 is covalently cross-linked (Glycyl lysine isopeptide (Lys-Gly) (interchain with G-Cter in SUMO)). The short motif at 285–294 is the Nuclear export signal (NES) element; it reads MTSALATMRV. The interval 295-319 is p38 MAPK-binding site; it reads DYEQIKIKKIEDASNPLLLKRRKKA. 2 consecutive short sequence motifs (bipartite nuclear localization signal) follow at residues 300 to 303 and 314 to 318; these read KIKK and KRRKK.

Belongs to the protein kinase superfamily. CAMK Ser/Thr protein kinase family. As to quaternary structure, heterodimer with p38-alpha/MAPK14; this heterodimer forms a stable complex: molecules are positioned 'face to face' so that the ATP-binding sites of both kinases are at the heterodimer interface. Interacts with PHC2. Interacts with HSF1. Sumoylation inhibits the protein kinase activity. In terms of processing, phosphorylated and activated by MAP kinase p38-alpha/MAPK14 at Thr-151, Ser-201 and Thr-263.

It is found in the cytoplasm. The protein localises to the nucleus. The enzyme catalyses L-seryl-[protein] + ATP = O-phospho-L-seryl-[protein] + ADP + H(+). It catalyses the reaction L-threonyl-[protein] + ATP = O-phospho-L-threonyl-[protein] + ADP + H(+). With respect to regulation, activated following phosphorylation by p38-alpha/MAPK14 following various stresses. Inhibited following sumoylation. Specifically inhibited by pyrrolopyridine inhibitors. In terms of biological role, stress-activated serine/threonine-protein kinase involved in cytokine production, endocytosis, reorganization of the cytoskeleton, cell migration, cell cycle control, chromatin remodeling, DNA damage response and transcriptional regulation. Following stress, it is phosphorylated and activated by MAP kinase p38-alpha/MAPK14, leading to phosphorylation of substrates. Phosphorylates serine in the peptide sequence, Hyd-X-R-X(2)-S, where Hyd is a large hydrophobic residue. Phosphorylates ALOX5, CDC25B, CDC25C, CEP131, ELAVL1, HNRNPA0, HSP27/HSPB1, KRT18, KRT20, LIMK1, LSP1, PABPC1, PARN, PDE4A, RCSD1, RPS6KA3, TAB3 and TTP/ZFP36. Phosphorylates HSF1; leading to the interaction with HSP90 proteins and inhibiting HSF1 homotrimerization, DNA-binding and transactivation activities. Mediates phosphorylation of HSP27/HSPB1 in response to stress, leading to the dissociation of HSP27/HSPB1 from large small heat-shock protein (sHsps) oligomers and impairment of their chaperone activities and ability to protect against oxidative stress effectively. Involved in inflammatory response by regulating tumor necrosis factor (TNF) and IL6 production post-transcriptionally: acts by phosphorylating AU-rich elements (AREs)-binding proteins ELAVL1, HNRNPA0, PABPC1 and TTP/ZFP36, leading to regulation of the stability and translation of TNF and IL6 mRNAs. Phosphorylation of TTP/ZFP36, a major post-transcriptional regulator of TNF, promotes its binding to 14-3-3 proteins and reduces its ARE mRNA affinity, leading to inhibition of dependent degradation of ARE-containing transcripts. Phosphorylates CEP131 in response to cellular stress following ultraviolet irradiation which promotes binding of CEP131 to 14-3-3 proteins and inhibits formation of novel centriolar satellites. Also involved in late G2/M checkpoint following DNA damage through a process of post-transcriptional mRNA stabilization: following DNA damage, relocalizes from nucleus to cytoplasm and phosphorylates HNRNPA0 and PARN, leading to stabilization of GADD45A mRNA. Involved in toll-like receptor signaling pathway (TLR) in dendritic cells: required for acute TLR-induced macropinocytosis by phosphorylating and activating RPS6KA3. In Cricetulus longicaudatus (Long-tailed dwarf hamster), this protein is MAP kinase-activated protein kinase 2 (MAPKAPK2).